A 546-amino-acid polypeptide reads, in one-letter code: Chaperonin GroEL 2 (546 aa).

ATP-binding positions include 30–33 (TLGP), K51, 87–91 (DGTTT), G415, and D495.

It belongs to the chaperonin (HSP60) family. Forms a cylinder of 14 subunits composed of two heptameric rings stacked back-to-back. Interacts with the co-chaperonin GroES.

It is found in the cytoplasm. It catalyses the reaction ATP + H2O + a folded polypeptide = ADP + phosphate + an unfolded polypeptide.. Functionally, together with its co-chaperonin GroES, plays an essential role in assisting protein folding. The GroEL-GroES system forms a nano-cage that allows encapsulation of the non-native substrate proteins and provides a physical environment optimized to promote and accelerate protein folding. The polypeptide is Chaperonin GroEL 2 (Burkholderia cenocepacia (strain HI2424)).